Consider the following 26-residue polypeptide: Unknown protein 16 (26 aa).

The disordered stretch occupies residues 1–26; sequence AINSESGVRSVVPQPCNALPNQGPEK.

This is Unknown protein 16 from Pseudotsuga menziesii (Douglas-fir).